A 48-amino-acid polypeptide reads, in one-letter code: Large ribosomal subunit protein bL32 (48 aa).

Residues 28-48 (VKDKDGSWKMPHRINKTTGEY) form a disordered region.

Belongs to the bacterial ribosomal protein bL32 family.

This is Large ribosomal subunit protein bL32 from Campylobacter concisus (strain 13826).